Reading from the N-terminus, the 1326-residue chain is Putative late blight resistance protein homolog R1B-19 (1326 aa).

2 coiled-coil regions span residues 421-444 (RYSD…ESLQ) and 536-558 (PRMK…KLLN). 570-577 (GMPGLGKT) lines the ATP pocket. An NB-ARC domain is found at 611 to 864 (LLSLLCDTIG…KVKTCRLHDV (254 aa)). Residues 749–770 (SEMEKEVECWEQVANNLGTRIH) are a coiled coil. LRR repeat units lie at residues 953-978 (FKFL…VYLK), 980-996 (FSAH…IYNL), 1027-1050 (LRHL…SAKL), 1053-1070 (LETL…LNFP), 1071-1094 (IRLE…ISAP), 1098-1118 (YLKL…ADHL), 1119-1146 (KNLE…MFPQ), 1167-1191 (FPNL…AMNI), and 1208-1230 (LIEK…AFKR). The HMA domain occupies 1209–1278 (IEKKTLKLNL…AWHARVVVPT (70 aa)).

This sequence belongs to the disease resistance NB-LRR family.

It localises to the cytoplasm. It is found in the membrane. In terms of biological role, confers resistance to late blight (Phytophthora infestans) races carrying the avirulence gene Avr1. Resistance proteins guard the plant against pathogens that contain an appropriate avirulence protein via an indirect interaction with this avirulence protein. That triggers a defense system including the hypersensitive response, which restricts the pathogen growth. The protein is Putative late blight resistance protein homolog R1B-19 (R1B-19) of Solanum demissum (Wild potato).